A 293-amino-acid chain; its full sequence is uncharacterized protein (293 aa).

Residues 1 to 58 (MQLQELHMLVVLAEELNMRKAAERLFVSQPALSQRLQTIEKAWGTKIFLRSQKGLTVT) form the HTH lysR-type domain. A DNA-binding region (H-T-H motif) is located at residues 18-37 (MRKAAERLFVSQPALSQRLQ).

It belongs to the LysR transcriptional regulatory family.

This is an uncharacterized protein from Bacillus subtilis (strain 168).